The sequence spans 391 residues: Phosphoglycerate kinase (391 aa).

Substrate-binding positions include Asp21–Asn23, Arg36, His59–Arg62, Arg113, and Arg146. Residues Lys197, Glu319, and Gly345 to Thr348 contribute to the ATP site.

It belongs to the phosphoglycerate kinase family. As to quaternary structure, monomer.

The protein localises to the cytoplasm. The catalysed reaction is (2R)-3-phosphoglycerate + ATP = (2R)-3-phospho-glyceroyl phosphate + ADP. It functions in the pathway carbohydrate degradation; glycolysis; pyruvate from D-glyceraldehyde 3-phosphate: step 2/5. This chain is Phosphoglycerate kinase, found in Shewanella baltica (strain OS195).